The primary structure comprises 352 residues: Anthranilate phosphoribosyltransferase (352 aa).

Residues G83, 86 to 87 (GD), T91, 93 to 96 (NIST), 111 to 119 (KHGGRSVSS), and A123 contribute to the 5-phospho-alpha-D-ribose 1-diphosphate site. G83 is a binding site for anthranilate. S95 is a Mg(2+) binding site. R169 contacts anthranilate. Mg(2+) contacts are provided by D228 and E229.

Belongs to the anthranilate phosphoribosyltransferase family. Homodimer. Mg(2+) serves as cofactor.

The catalysed reaction is N-(5-phospho-beta-D-ribosyl)anthranilate + diphosphate = 5-phospho-alpha-D-ribose 1-diphosphate + anthranilate. Its pathway is amino-acid biosynthesis; L-tryptophan biosynthesis; L-tryptophan from chorismate: step 2/5. In terms of biological role, catalyzes the transfer of the phosphoribosyl group of 5-phosphorylribose-1-pyrophosphate (PRPP) to anthranilate to yield N-(5'-phosphoribosyl)-anthranilate (PRA). The protein is Anthranilate phosphoribosyltransferase of Neisseria meningitidis serogroup C (strain 053442).